A 450-amino-acid chain; its full sequence is Membrane-bound lytic murein transglycosylase F 2 (450 aa).

Positions 1–20 (MRTWIAILAVVLVLLLNACT) are cleaved as a signal peptide. A non-LT domain region spans residues 21–261 (DGPEDGPRLE…AMENRYYTYV (241 aa)). Positions 262-450 (GEFDFVDLRA…YRDVIRQAFE (189 aa)) are LT domain. Glu308 is an active-site residue.

In the N-terminal section; belongs to the bacterial solute-binding protein 3 family. This sequence in the C-terminal section; belongs to the transglycosylase Slt family.

Its subcellular location is the cell outer membrane. The catalysed reaction is Exolytic cleavage of the (1-&gt;4)-beta-glycosidic linkage between N-acetylmuramic acid (MurNAc) and N-acetylglucosamine (GlcNAc) residues in peptidoglycan, from either the reducing or the non-reducing ends of the peptidoglycan chains, with concomitant formation of a 1,6-anhydrobond in the MurNAc residue.. Murein-degrading enzyme that degrades murein glycan strands and insoluble, high-molecular weight murein sacculi, with the concomitant formation of a 1,6-anhydromuramoyl product. Lytic transglycosylases (LTs) play an integral role in the metabolism of the peptidoglycan (PG) sacculus. Their lytic action creates space within the PG sacculus to allow for its expansion as well as for the insertion of various structures such as secretion systems and flagella. The chain is Membrane-bound lytic murein transglycosylase F 2 from Alkalilimnicola ehrlichii (strain ATCC BAA-1101 / DSM 17681 / MLHE-1).